Reading from the N-terminus, the 708-residue chain is Kin of IRRE-like protein 2 (708 aa).

A signal peptide spans 1–20 (MLRMRVPALLVLLFCFRGRA). The Extracellular portion of the chain corresponds to 21 to 510 (GPSPHFLQQP…GRRDLLPTVR (490 aa)). Ig-like C2-type domains follow at residues 24–118 (PHFL…AQLH), 123–222 (PEAP…ITLS), 227–307 (PEVT…TALD), 312–394 (PILQ…ARLT), and 398–501 (PPVV…ASLG). An intrachain disulfide couples cysteine 45 to cysteine 103. N-linked (GlcNAc...) asparagine glycosylation is present at asparagine 143. Cystine bridges form between cysteine 146-cysteine 204 and cysteine 248-cysteine 291. Positions 149–151 (RGD) match the Cell attachment site motif. N-linked (GlcNAc...) asparagine glycosylation occurs at asparagine 301. Intrachain disulfides connect cysteine 333/cysteine 375 and cysteine 419/cysteine 485. Asparagine 484 carries an N-linked (GlcNAc...) asparagine glycan. The helical transmembrane segment at 511 to 531 (IVAGVAAATTTLLMVITGVAL) threads the bilayer. Topologically, residues 532–708 (CCWRHSKASA…PSHPRLQTHV (177 aa)) are cytoplasmic. A disordered region spans residues 545–601 (EQKNLMRIPGSSDGSSSRGPEEEETGSREDRGPIVHTDHSDLVLEEEGTLETKDPTN). Low complexity predominate over residues 553–562 (PGSSDGSSSR). Positions 569–586 (TGSREDRGPIVHTDHSDL) are enriched in basic and acidic residues. At serine 571 the chain carries Phosphoserine. Phosphotyrosine is present on residues tyrosine 603, tyrosine 604, and tyrosine 661. The disordered stretch occupies residues 684-708 (LAPGTPPFPYAAFPTPSHPRLQTHV).

Belongs to the immunoglobulin superfamily. Homodimer. Interacts with NPHS2/podocin (via the C-terminus). Interacts with NPHS1 (via the Ig-like domains). Interacts with FYN. Post-translationally, N-glycosylated. In terms of processing, the extracellular domain is cleaved leading to the generation of a soluble fragment and a membrane-bound C-terminal fragment, which is further cleaved by gamma-secretase. Highly expressed in beta-cells of the pancreatic islets.

The protein localises to the cell membrane. In terms of biological role, may regulate basal insulin secretion. The chain is Kin of IRRE-like protein 2 (KIRREL2) from Homo sapiens (Human).